Reading from the N-terminus, the 253-residue chain is Isopentenyl-diphosphate delta-isomerase IDI1 (253 aa).

Residue K61 participates in substrate binding. Mg(2+)-binding residues include H65 and H76. The Nudix hydrolase domain occupies 74–224 (LLHRAFSVFL…SLVFTPWFKL (151 aa)). Positions 94 and 99 each coordinate substrate. The active site involves C111. S112 is a substrate binding site. The Nudix box signature appears at 112 to 145 (SHPLHIPTETGSTLEDSIAGVKRAAQRKLEHELG). Residues E174 and E176 each contribute to the Mg(2+) site. Residue E176 is part of the active site.

It belongs to the IPP isomerase type 1 family. Requires Mg(2+) as cofactor.

It carries out the reaction isopentenyl diphosphate = dimethylallyl diphosphate. It participates in isoprenoid biosynthesis; dimethylallyl diphosphate biosynthesis; dimethylallyl diphosphate from isopentenyl diphosphate: step 1/1. In terms of biological role, isopentenyl-diphosphate delta-isomerase; part of the second module of ergosterol biosynthesis pathway that includes the middle steps of the pathway. IDI1 catalyzes the 1,3-allylic rearrangement of isopentenyl (IPP) to its highly electrophilic allylic isomer, dimethylallyl diphosphate (DMAPP). The second module is carried out in the vacuole and involves the formation of farnesyl diphosphate, which is also an important intermediate in the biosynthesis of ubiquinone, dolichol, heme and prenylated proteins. Activity by the mevalonate kinase ERG12 (FG05912) first converts mevalonate into 5-phosphomevalonate. 5-phosphomevalonate is then further converted to 5-diphosphomevalonate by the phosphomevalonate kinase ERG8 (FG09764). The diphosphomevalonate decarboxylase ERG19 (FG10424) then produces isopentenyl diphosphate. The isopentenyl-diphosphate delta-isomerase IDI1 (FG09722) then catalyzes the 1,3-allylic rearrangement of the homoallylic substrate isopentenyl (IPP) to its highly electrophilic allylic isomer, dimethylallyl diphosphate (DMAPP). Finally the farnesyl diphosphate synthase ERG20 (FG06784) catalyzes the sequential condensation of isopentenyl pyrophosphate with dimethylallyl pyrophosphate, and then with the resultant geranylpyrophosphate to the ultimate product farnesyl pyrophosphate. This is Isopentenyl-diphosphate delta-isomerase IDI1 from Gibberella zeae (strain ATCC MYA-4620 / CBS 123657 / FGSC 9075 / NRRL 31084 / PH-1) (Wheat head blight fungus).